The primary structure comprises 749 residues: Sentrin-specific protease 5 (749 aa).

The span at Thr268 to Asn279 shows a compositional bias: basic and acidic residues. Disordered stretches follow at residues Thr268–Val288 and Gln394–Gly440. The interval Phe557 to Leu718 is protease. Residues His640, Asp657, and Cys707 contribute to the active site.

The protein belongs to the peptidase C48 family. In terms of assembly, interacts with CCAR2.

The protein localises to the nucleus. The protein resides in the nucleolus. Functionally, protease that catalyzes two essential functions in the SUMO pathway: processing of full-length SUMO3 to its mature form and deconjugation of SUMO2 and SUMO3 from targeted proteins. Has weak proteolytic activity against full-length SUMO1 or SUMO1 conjugates. Required for cell division. The polypeptide is Sentrin-specific protease 5 (Senp5) (Mus musculus (Mouse)).